Here is a 76-residue protein sequence, read N- to C-terminus: Small ribosomal subunit protein uS17 (76 aa).

It belongs to the universal ribosomal protein uS17 family. As to quaternary structure, part of the 30S ribosomal subunit.

One of the primary rRNA binding proteins, it binds specifically to the 5'-end of 16S ribosomal RNA. This chain is Small ribosomal subunit protein uS17, found in Ruegeria pomeroyi (strain ATCC 700808 / DSM 15171 / DSS-3) (Silicibacter pomeroyi).